The primary structure comprises 381 residues: Chaperone protein DnaJ (381 aa).

The 66-residue stretch at 5–70 (DFYEVLGVGR…QKKAAYDQYG (66 aa)) folds into the J domain. The CR-type zinc-finger motif lies at 136 to 214 (GVSKEIEVPT…CHGQGRKQKT (79 aa)). Residues Cys149, Cys152, Cys166, Cys169, Cys188, Cys191, Cys202, and Cys205 each coordinate Zn(2+). CXXCXGXG motif repeat units follow at residues 149–156 (CDTCDGSG), 166–173 (CGTCHGHG), 188–195 (CPTCHGKG), and 202–209 (CNECHGQG).

The protein belongs to the DnaJ family. Homodimer. Zn(2+) is required as a cofactor.

The protein resides in the cytoplasm. Participates actively in the response to hyperosmotic and heat shock by preventing the aggregation of stress-denatured proteins and by disaggregating proteins, also in an autonomous, DnaK-independent fashion. Unfolded proteins bind initially to DnaJ; upon interaction with the DnaJ-bound protein, DnaK hydrolyzes its bound ATP, resulting in the formation of a stable complex. GrpE releases ADP from DnaK; ATP binding to DnaK triggers the release of the substrate protein, thus completing the reaction cycle. Several rounds of ATP-dependent interactions between DnaJ, DnaK and GrpE are required for fully efficient folding. Also involved, together with DnaK and GrpE, in the DNA replication of plasmids through activation of initiation proteins. In Vibrio campbellii (strain ATCC BAA-1116), this protein is Chaperone protein DnaJ.